The chain runs to 369 residues: MSGNTLGTLFTVTTFGESHGPAIGCVIDGCPPGMALTEADVQLELDRRKPGTSRHVTQRQEPDQVEILSGVFEGVTTGAPIALLIRNTDQRSKDYGNIAETFRPGHADYTYWQKYGVRDYRGGGRSSARLTAPVVGAGAIAKKWLRERFGVEVRGYMSALGEIEIPFVDWSHVRENPFFAPNADIVPQLEGYMDALRKDGDSIGARIDVVASGVPVGWGEPLFDRLDADIAHAMMGINAVKGVEIGAGFASVAQRGSVHGDELTPDGFVGNHAGGVLGGISTGQDITVSIAIKPTSSIRTPRRSITRAGEPAVVETFGRHDPCVGIRATPIAESMLALVLIDHALRHRAQCGDVSSATPRIAARAPDAQ.

NADP(+)-binding residues include arginine 48 and arginine 54. Residues 125-127 (RSS), 238-239 (NA), glycine 278, 293-297 (KPTSS), and arginine 319 contribute to the FMN site.

The protein belongs to the chorismate synthase family. In terms of assembly, homotetramer. FMNH2 is required as a cofactor.

It carries out the reaction 5-O-(1-carboxyvinyl)-3-phosphoshikimate = chorismate + phosphate. It participates in metabolic intermediate biosynthesis; chorismate biosynthesis; chorismate from D-erythrose 4-phosphate and phosphoenolpyruvate: step 7/7. In terms of biological role, catalyzes the anti-1,4-elimination of the C-3 phosphate and the C-6 proR hydrogen from 5-enolpyruvylshikimate-3-phosphate (EPSP) to yield chorismate, which is the branch point compound that serves as the starting substrate for the three terminal pathways of aromatic amino acid biosynthesis. This reaction introduces a second double bond into the aromatic ring system. The polypeptide is Chorismate synthase (Burkholderia pseudomallei (strain 1106a)).